Reading from the N-terminus, the 926-residue chain is Coatomer subunit beta'-2 (926 aa).

9 WD repeats span residues 13–52, 55–94, 97–136, 140–180, 183–224, 227–266, 269–309, 351–390, and 461–501; these read QRSERVKSVDLHPTEPWILASLYSGTLCIWNYQTQVMAKS, VTELPVRSAKFVARKQWVVAGADDMYIRVYNYNTMDKVKV, AHSDYIRCVAVHPTLPYVLSSSDDMLIKLWDWEKGWACTQ, GHSH…PNFT, AHQK…CVQT, GHTHNVSAVCFHPELPIIITGSEDGTVRIWHATTYRLENT, YGLE…ASMD, TCDLYPQSLKHNPNGRFVVVCGDGEYIIYTALAWRNRSFG, and RIDV…SHFD. The segment at 847–926 is disordered; it reads EEESLENGDM…GTNNEGNPSA (80 aa). A compositionally biased stretch (basic and acidic residues) spans 868–887; the sequence is NEQRNEDDVAEHVEEHHEEK. Acidic residues predominate over residues 888–900; the sequence is EAEEEEGIVDGDS. Residues 917–926 are compositionally biased toward polar residues; the sequence is GTNNEGNPSA.

The protein belongs to the WD repeat COPB2 family. Oligomeric complex that consists of at least the alpha, beta, beta', gamma, delta, epsilon and zeta subunits.

Its subcellular location is the cytoplasm. The protein localises to the golgi apparatus membrane. It is found in the cytoplasmic vesicle. It localises to the COPI-coated vesicle membrane. Functionally, the coatomer is a cytosolic protein complex that binds to dilysine motifs and reversibly associates with Golgi non-clathrin-coated vesicles, which further mediate biosynthetic protein transport from the ER, via the Golgi up to the trans Golgi network. Coatomer complex is required for budding from Golgi membranes, and is essential for the retrograde Golgi-to-ER transport of dilysine-tagged proteins. This chain is Coatomer subunit beta'-2, found in Arabidopsis thaliana (Mouse-ear cress).